Consider the following 145-residue polypeptide: MRLNTIKPGAGSKSAAKRVGRGIGSGLGKTCGRGHKGQKSRAGGFHKVGFEGGQMPLQRRLPKRGFVSLTAARKVEVRLSELDKLPVDDIDLLVLMQAGVVPADALSAKVVLSGTIGRKITLRGIGATKGALAAIEAAGGSVATA.

The interval 1 to 43 (MRLNTIKPGAGSKSAAKRVGRGIGSGLGKTCGRGHKGQKSRAG) is disordered. Over residues 21–31 (RGIGSGLGKTC) the composition is skewed to gly residues.

This sequence belongs to the universal ribosomal protein uL15 family. As to quaternary structure, part of the 50S ribosomal subunit.

Binds to the 23S rRNA. This is Large ribosomal subunit protein uL15 from Aromatoleum aromaticum (strain DSM 19018 / LMG 30748 / EbN1) (Azoarcus sp. (strain EbN1)).